The chain runs to 258 residues: Enterotoxin type D (258 aa).

A signal peptide spans 1 to 25 (MKKFNILIALLFFTSLVISPLNVKA). 4 residues coordinate Zn(2+): D212, H248, H250, and D252.

Belongs to the staphylococcal/streptococcal toxin family. As to quaternary structure, homodimer; zinc-dependent. Interacts with MHC class II molecules composed of alpha/HLA-DRA and beta/HLA-DRB1 chains. The cofactor is Zn(2+).

Its subcellular location is the secreted. Functionally, staphylococcal enterotoxin that activates the host immune system by binding as unprocessed molecules to major histocompatibility (MHC) complex class II and T-cell receptor (TCR) molecules. In turn, this ternary complex activates a large number of T-lymphocytes initiating a systemic release of pro-inflammatory cytokines. In addition, induces B-cell proliferation and differentiation in the presence of T-cells. Causes also the intoxication staphylococcal food poisoning syndrome. The chain is Enterotoxin type D (entD) from Staphylococcus aureus.